A 1419-amino-acid polypeptide reads, in one-letter code: Formin-1 (1419 aa).

The tract at residues 1 to 622 (MEGTHCTLQL…TAEPQHQSPP (622 aa)) is microtubule-binding. Disordered regions lie at residues 138-194 (DWQG…MGKD), 262-331 (LGRE…KVVA), 343-641 (VVKT…TPKD), and 685-711 (SLTEQDDRTPGRLQAVWPPPKTKDTEE). A compositionally biased stretch (basic residues) spans 151 to 163 (RSTHGNKKPRRSS). Positions 298–317 (SHQDPEKHPEAEKDEMEKPA) are enriched in basic and acidic residues. Residues 394–411 (RSSQSPAGETASISSVSA) show a composition bias toward polar residues. Positions 425 to 438 (IESEKLDEAPEGKR) are enriched in basic and acidic residues. The tract at residues 456 to 842 (NKRRAGLPLG…LNISSLSQLS (387 aa)) is mediates interaction with alpha-catenin. Residues 504–517 (FNNSASQSSTHKQT) are compositionally biased toward polar residues. Pro residues predominate over residues 520-529 (VPSPLSPRLP). Residues 614–623 (AEPQHQSPPG) show a composition bias toward polar residues. Over residues 685-694 (SLTEQDDRTP) the composition is skewed to basic and acidic residues. A coiled-coil region spans residues 720-774 (AEYQAAILHLKREHKEEIENLQAQFELRAFHIRGEHAMITARLEETIENLKHELE). Disordered regions lie at residues 859–978 (GMAS…AIEP) and 1390–1419 (SEKKVETKKINPTASLKERLRQKEASVTTN). Pro residues-rich tracts occupy residues 868 to 882 (LPPPPASIPPPPPLP) and 890 to 958 (PAPP…PPPG). Residues 870–957 (PPPASIPPPP…PPGLAPPPPP (88 aa)) form the FH1 domain. The 417-residue stretch at 972–1388 (RKPAIEPSCP…KMAQESVSKL (417 aa)) folds into the FH2 domain.

Belongs to the formin homology family. Cappuccino subfamily. As to quaternary structure, interacts with alpha-catenin and may interact with tubulin. Post-translationally, phosphorylated on serine and possibly threonine residues.

It localises to the nucleus. The protein localises to the cytoplasm. It is found in the cell junction. The protein resides in the adherens junction. Its subcellular location is the cell membrane. Its function is as follows. Plays a role in the formation of adherens junction and the polymerization of linear actin cables. The chain is Formin-1 (FMN1) from Homo sapiens (Human).